A 264-amino-acid polypeptide reads, in one-letter code: MISKAFFVRGDFQDCDTKGKERVVILLTVLCLLLGFLYAVIGYADFTVRHLSSTTLAFTNDLCAAYTSGSLVKTTWSGRAPFPTYMIALSTIIRSILFTMFGGVGMATLPLSLIFAFKNRPKCVTTRAQYVKVMALQEATDLAKRSNELKTATLGLQREERGGKKGRKFRKNVKKVQQADTSWALTVRNLALSIIWLLHIIVFMLVNPPAFPFLNQVFIQLDSAWGLLGTTTFAIFCYYLVMSVISGEMHLGMRLLLLSIHPMK.

The next 4 membrane-spanning stretches (helical) occupy residues 23 to 43, 96 to 116, 194 to 214, and 225 to 245; these read VVILLTVLCLLLGFLYAVIGY, ILFTMFGGVGMATLPLSLIFA, IIWLLHIIVFMLVNPPAFPFL, and WGLLGTTTFAIFCYYLVMSVI.

This sequence belongs to the LIMR family.

It is found in the membrane. The sequence is that of LIMR family protein SELMODRAFT_416716 from Selaginella moellendorffii (Spikemoss).